The sequence spans 573 residues: PCNA-interacting partner (573 aa).

Residues 492–532 (TGGQVKNKPCKNVANKRSKRKQVDIQSETTNAQENEPPQKK) are disordered. A compositionally biased stretch (polar residues) spans 515-527 (DIQSETTNAQENE).

This sequence belongs to the PARI family.

It localises to the cytoplasm. The protein localises to the nucleus. Required to suppress inappropriate homologous recombination, thereby playing a central role DNA repair and in the maintenance of genomic stability. The polypeptide is PCNA-interacting partner (parpbp) (Xenopus tropicalis (Western clawed frog)).